Reading from the N-terminus, the 198-residue chain is Guanylate kinase (198 aa).

Positions 6–192 constitute a Guanylate kinase-like domain; that stretch reads KSIVIFTGPS…AAQEIREILH (187 aa). 13–20 is an ATP binding site; the sequence is GPSGVGKG.

It belongs to the guanylate kinase family.

It is found in the cytoplasm. The enzyme catalyses GMP + ATP = GDP + ADP. Functionally, essential for recycling GMP and indirectly, cGMP. This Mycoplasmopsis synoviae (strain 53) (Mycoplasma synoviae) protein is Guanylate kinase.